We begin with the raw amino-acid sequence, 481 residues long: NADH-quinone oxidoreductase subunit N (481 aa).

13 helical membrane-spanning segments follow: residues 14-34 (LILS…GDGF), 38-57 (IGWG…TGPA), 76-96 (FAKL…PGFF), 108-128 (PVLI…GDLL), 162-182 (FVLG…LYGF), 204-224 (MFGM…VPFH), 235-255 (PTPV…ALLL), 272-292 (IVVF…IGQT), 297-317 (LLAY…AAGS), 323-343 (ATMT…ICVL), 369-389 (LAAA…LFGF), 403-423 (GFWP…FYYL), and 449-469 (GLIT…IPLL).

The protein belongs to the complex I subunit 2 family. NDH-1 is composed of 14 different subunits. Subunits NuoA, H, J, K, L, M, N constitute the membrane sector of the complex.

The protein localises to the cell inner membrane. The catalysed reaction is a quinone + NADH + 5 H(+)(in) = a quinol + NAD(+) + 4 H(+)(out). NDH-1 shuttles electrons from NADH, via FMN and iron-sulfur (Fe-S) centers, to quinones in the respiratory chain. The immediate electron acceptor for the enzyme in this species is believed to be ubiquinone. Couples the redox reaction to proton translocation (for every two electrons transferred, four hydrogen ions are translocated across the cytoplasmic membrane), and thus conserves the redox energy in a proton gradient. In Rhizorhabdus wittichii (strain DSM 6014 / CCUG 31198 / JCM 15750 / NBRC 105917 / EY 4224 / RW1) (Sphingomonas wittichii), this protein is NADH-quinone oxidoreductase subunit N.